A 118-amino-acid chain; its full sequence is Large ribosomal subunit protein bL20 (118 aa).

It belongs to the bacterial ribosomal protein bL20 family.

Functionally, binds directly to 23S ribosomal RNA and is necessary for the in vitro assembly process of the 50S ribosomal subunit. It is not involved in the protein synthesizing functions of that subunit. This Francisella philomiragia subsp. philomiragia (strain ATCC 25017 / CCUG 19701 / FSC 153 / O#319-036) protein is Large ribosomal subunit protein bL20.